The following is a 429-amino-acid chain: MNHSRSHALFAQAQTLLPGGVNSPVRAFKSVGGEPFFVARADGPYLFDVDDNRYIDYVGSWGPMIAGHNHPAVREAVEQSIRNGLSFGAPCAAEVAMAQTITRLVPSCEMVRMVNSGTEATLSAVRLARGATGRNRIIKFEGCYHGHGDSFLVKAGSGMLTLGVPTSPGVPAGLSELTATLSFNDFEGATALFDEIGAEVAAVIIEPVVGNANCIPPQAGYLQHLRTLCTRHGALLIFDEVMTGFRVALGGAQAHYGVTPDLTTFGKIIGGGMPVGAYGGRRDLMEQVAPAGPIYQAGTLSGNPVAMAAGLAMLELVQEPGFHTRLSEATSMLCEGLEDAARAAGIAVTTNQVGGMFGLFFTDDIVESYAQATACDITTFNRFFHAMLQQGVYLAPSAYEAGFMSSAHDEAVIDATLAAAREAFAEVAR.

N6-(pyridoxal phosphate)lysine is present on K267.

The protein belongs to the class-III pyridoxal-phosphate-dependent aminotransferase family. HemL subfamily. As to quaternary structure, homodimer. It depends on pyridoxal 5'-phosphate as a cofactor.

The protein resides in the cytoplasm. It carries out the reaction (S)-4-amino-5-oxopentanoate = 5-aminolevulinate. The protein operates within porphyrin-containing compound metabolism; protoporphyrin-IX biosynthesis; 5-aminolevulinate from L-glutamyl-tRNA(Glu): step 2/2. The chain is Glutamate-1-semialdehyde 2,1-aminomutase from Xanthomonas axonopodis pv. citri (strain 306).